Here is a 343-residue protein sequence, read N- to C-terminus: Small ribosomal subunit biogenesis GTPase RsgA (343 aa).

Residues 116–275 (RGQLKPVAAN…LIDSPGIREF (160 aa)) enclose the CP-type G domain. GTP-binding positions include 163–166 (NKAD) and 217–225 (GQSGVGKSS). Residues Cys299, Cys304, His306, and Cys312 each coordinate Zn(2+).

Belongs to the TRAFAC class YlqF/YawG GTPase family. RsgA subfamily. Monomer. Associates with 30S ribosomal subunit, binds 16S rRNA. It depends on Zn(2+) as a cofactor.

It is found in the cytoplasm. Functionally, one of several proteins that assist in the late maturation steps of the functional core of the 30S ribosomal subunit. Helps release RbfA from mature subunits. May play a role in the assembly of ribosomal proteins into the subunit. Circularly permuted GTPase that catalyzes slow GTP hydrolysis, GTPase activity is stimulated by the 30S ribosomal subunit. This is Small ribosomal subunit biogenesis GTPase RsgA from Pseudomonas syringae pv. syringae (strain B728a).